Reading from the N-terminus, the 250-residue chain is 2-C-methyl-D-erythritol 4-phosphate cytidylyltransferase (250 aa).

The protein belongs to the IspD/TarI cytidylyltransferase family. IspD subfamily.

It carries out the reaction 2-C-methyl-D-erythritol 4-phosphate + CTP + H(+) = 4-CDP-2-C-methyl-D-erythritol + diphosphate. It participates in isoprenoid biosynthesis; isopentenyl diphosphate biosynthesis via DXP pathway; isopentenyl diphosphate from 1-deoxy-D-xylulose 5-phosphate: step 2/6. Functionally, catalyzes the formation of 4-diphosphocytidyl-2-C-methyl-D-erythritol from CTP and 2-C-methyl-D-erythritol 4-phosphate (MEP). In Streptomyces avermitilis (strain ATCC 31267 / DSM 46492 / JCM 5070 / NBRC 14893 / NCIMB 12804 / NRRL 8165 / MA-4680), this protein is 2-C-methyl-D-erythritol 4-phosphate cytidylyltransferase.